A 224-amino-acid polypeptide reads, in one-letter code: Cytidylate kinase (224 aa).

An ATP-binding site is contributed by 11 to 19; the sequence is GPAAAGKST.

Belongs to the cytidylate kinase family. Type 1 subfamily.

Its subcellular location is the cytoplasm. The enzyme catalyses CMP + ATP = CDP + ADP. It catalyses the reaction dCMP + ATP = dCDP + ADP. The polypeptide is Cytidylate kinase (Geobacillus thermodenitrificans (strain NG80-2)).